Here is a 40-residue protein sequence, read N- to C-terminus: Dolichyl-diphosphooligosaccharide--protein glycosyltransferase subunit 4 (40 aa).

At 1-4 (MITD) the chain is on the lumenal side. A helical transmembrane segment spans residues 5 to 25 (VQLAIFSNVLGVFLFLLVVAY). Topologically, residues 26–40 (HYINANTGKSSIKTK) are cytoplasmic.

This sequence belongs to the OST4 family. As to quaternary structure, component of the oligosaccharyltransferase (OST) complex.

It is found in the endoplasmic reticulum membrane. Its function is as follows. Subunit of the oligosaccharyl transferase (OST) complex that catalyzes the initial transfer of a defined glycan (Glc(3)Man(9)GlcNAc(2) in eukaryotes) from the lipid carrier dolichol-pyrophosphate to an asparagine residue within an Asn-X-Ser/Thr consensus motif in nascent polypeptide chains, the first step in protein N-glycosylation. N-glycosylation occurs cotranslationally and the complex associates with the Sec61 complex at the channel-forming translocon complex that mediates protein translocation across the endoplasmic reticulum (ER). All subunits are required for a maximal enzyme activity. This is Dolichyl-diphosphooligosaccharide--protein glycosyltransferase subunit 4 from Drosophila virilis (Fruit fly).